The primary structure comprises 430 residues: Purine nucleoside phosphorylase LACC1 (430 aa).

Position 247 is an N6-acetyllysine (lysine 247). Residues histidine 250, cysteine 284, and histidine 301 each coordinate Zn(2+).

This sequence belongs to the purine nucleoside phosphorylase YfiH/LACC1 family. Interacts with FASN. Interacts with SDHA. Interacts with ATF6, EIF2AK3 and ERN1. Post-translationally, phosphorylated on tyrosine residues. In terms of tissue distribution, predominantly expressed in myeloid cells. Highly expressed in primary macrophages and dendritic cells sorted from the peritoneum or spleen, respectively (at protein level).

Its subcellular location is the cytoplasm. It localises to the nucleus. It is found in the endoplasmic reticulum. The protein localises to the peroxisome. The enzyme catalyses adenosine + phosphate = alpha-D-ribose 1-phosphate + adenine. It catalyses the reaction inosine + phosphate = alpha-D-ribose 1-phosphate + hypoxanthine. It carries out the reaction guanosine + phosphate = alpha-D-ribose 1-phosphate + guanine. The catalysed reaction is S-methyl-5'-thioadenosine + phosphate = 5-(methylsulfanyl)-alpha-D-ribose 1-phosphate + adenine. The enzyme catalyses adenosine + H2O + H(+) = inosine + NH4(+). In terms of biological role, purine nucleoside enzyme that catalyzes the phosphorolysis of adenosine, guanosine and inosine nucleosides, yielding D-ribose 1-phosphate and the respective free bases, adenine, guanine and hypoxanthine. Also catalyzes the phosphorolysis of S-methyl-5'-thioadenosine into adenine and S-methyl-5-thio-alpha-D-ribose 1-phosphate. Also has adenosine deaminase activity. Acts as a regulator of innate immunity in macrophages by modulating the purine nucleotide metabolism, thereby regulating the metabolic function and bioenergetic state of macrophages. Enables a purine nucleotide cycle between adenosine and inosine monophosphate and adenylosuccinate that prevents cytoplasmic acidification and balances the cytoplasmic-mitochondrial redox interface. The purine nucleotide cycle consumes aspartate and releases fumarate in a manner involving fatty acid oxidation and ATP-citrate lyase activity. Participates in pattern recognition receptor-induced cytokines in macrophages: associates with the NOD2-signaling complex and promotes optimal NOD2-induced signaling, cytokine secretion and bacterial clearance. Localizes to the endoplasmic reticulum upon PRR stimulation of macrophages and associates with endoplasmic reticulum-stress sensors, promoting the endoplasmic reticulum unfolded protein response (UPR). Does not show laccase activity. The protein is Purine nucleoside phosphorylase LACC1 of Mus musculus (Mouse).